The primary structure comprises 295 residues: ATP synthase gamma chain (295 aa).

It belongs to the ATPase gamma chain family. In terms of assembly, F-type ATPases have 2 components, CF(1) - the catalytic core - and CF(0) - the membrane proton channel. CF(1) has five subunits: alpha(3), beta(3), gamma(1), delta(1), epsilon(1). CF(0) has three main subunits: a, b and c.

It is found in the cell inner membrane. Functionally, produces ATP from ADP in the presence of a proton gradient across the membrane. The gamma chain is believed to be important in regulating ATPase activity and the flow of protons through the CF(0) complex. This is ATP synthase gamma chain from Chlorobium phaeobacteroides (strain BS1).